The following is a 378-amino-acid chain: T-cell immunoglobulin and mucin domain-containing protein 4 (378 aa).

Positions 1-24 (MSKEPLILWLMIEFWWLYLTPVTS) are cleaved as a signal peptide. The region spanning 25 to 126 (ETVVTEVLGH…PGWFNDVKIN (102 aa)) is the Ig-like V-type domain. Residues 25–314 (ETVVTEVLGH…SMKNEMPISQ (290 aa)) are Extracellular-facing. Disulfide bonds link Cys-40-Cys-112, Cys-53-Cys-64, and Cys-59-Cys-111. Disordered stretches follow at residues 136–160 (TTTHRTATTTTRRTTTTSPTTTRQM) and 269–304 (WKTSDSVSSPQPGASDTAVPEQNKTTKTGQMDGIPM). A compositionally biased stretch (polar residues) spans 269 to 297 (WKTSDSVSSPQPGASDTAVPEQNKTTKTG). Asn-291 is a glycosylation site (N-linked (GlcNAc...) asparagine). Residues 315–335 (LLMIIAPSLGFVLFALFVAFL) traverse the membrane as a helical segment. Topologically, residues 336-378 (LRGKLMETYCSQKHTRLDYIGDSKNVLNDVQHGREDEDGLFTL) are cytoplasmic. Residue Ser-358 is modified to Phosphoserine.

It belongs to the immunoglobulin superfamily. TIM family. Interacts with MERTK; this interaction enhances TIMD4-mediated efferocytosis. Interacts with EPHA2.

The protein localises to the cell membrane. Its subcellular location is the secreted. It is found in the extracellular exosome. Functionally, phosphatidylserine receptor that plays different role in immune response including phagocytosis of apoptotic cells and T-cell regulation. Controls T-cell activation in a bimodal fashion, decreasing the activation of naive T-cells by inducing cell cycle arrest, while increasing proliferation of activated T-cells by activating AKT1 and ERK1/2 phosphorylations and subsequent signaling pathways. Also plays a role in efferocytosis which is the process by which apoptotic cells are removed by phagocytic cells. Mechanistically, promotes the engulfment of apoptotic cells or exogenous particles by securing them to phagocytes through direct binding to phosphatidylserine present on apoptotic cells, while other engulfment receptors such as MERTK efficiently recognize apoptotic cells and mediate their ingestion. Additionally, promotes autophagy process by suppressing NLRP3 inflammasome activity via activation of LKB1/PRKAA1 pathway in a phosphatidylserine-dependent mechanism. (Microbial infection) Plays a positive role in exosome-mediated trafficking of HIV-1 virus and its entry into immune cells. The sequence is that of T-cell immunoglobulin and mucin domain-containing protein 4 (TIMD4) from Homo sapiens (Human).